The primary structure comprises 359 residues: 3-isopropylmalate dehydrogenase (359 aa).

76–89 (GPKWDDPSAKTRPE) provides a ligand contact to NAD(+). Residues R96, R106, R134, and D223 each coordinate substrate. Positions 223, 247, and 251 each coordinate Mg(2+). 281–293 (GSAPDIAGKSVAN) serves as a coordination point for NAD(+).

The protein belongs to the isocitrate and isopropylmalate dehydrogenases family. LeuB type 1 subfamily. In terms of assembly, homodimer. The cofactor is Mg(2+). Requires Mn(2+) as cofactor.

Its subcellular location is the cytoplasm. It carries out the reaction (2R,3S)-3-isopropylmalate + NAD(+) = 4-methyl-2-oxopentanoate + CO2 + NADH. Its pathway is amino-acid biosynthesis; L-leucine biosynthesis; L-leucine from 3-methyl-2-oxobutanoate: step 3/4. In terms of biological role, catalyzes the oxidation of 3-carboxy-2-hydroxy-4-methylpentanoate (3-isopropylmalate) to 3-carboxy-4-methyl-2-oxopentanoate. The product decarboxylates to 4-methyl-2 oxopentanoate. This Rhodopirellula baltica (strain DSM 10527 / NCIMB 13988 / SH1) protein is 3-isopropylmalate dehydrogenase.